Consider the following 389-residue polypeptide: Phospho-N-acetylmuramoyl-pentapeptide-transferase (389 aa).

A run of 10 helical transmembrane segments spans residues 21–41 (FITF…LFFG), 70–90 (GTPT…TLLW), 97–117 (FVWV…VDDY), 134–154 (YMWQ…SVSA), 189–209 (TISY…VIVG), 222–242 (GLAI…AYLT), 259–279 (AGEL…FLWF), 286–306 (VFMG…IAVI), 311–331 (IVLF…MIQV), and 366–386 (QVVV…LSTL).

The protein belongs to the glycosyltransferase 4 family. MraY subfamily. Mg(2+) serves as cofactor.

The protein localises to the cell inner membrane. It catalyses the reaction UDP-N-acetyl-alpha-D-muramoyl-L-alanyl-gamma-D-glutamyl-meso-2,6-diaminopimeloyl-D-alanyl-D-alanine + di-trans,octa-cis-undecaprenyl phosphate = di-trans,octa-cis-undecaprenyl diphospho-N-acetyl-alpha-D-muramoyl-L-alanyl-D-glutamyl-meso-2,6-diaminopimeloyl-D-alanyl-D-alanine + UMP. Its pathway is cell wall biogenesis; peptidoglycan biosynthesis. Functionally, catalyzes the initial step of the lipid cycle reactions in the biosynthesis of the cell wall peptidoglycan: transfers peptidoglycan precursor phospho-MurNAc-pentapeptide from UDP-MurNAc-pentapeptide onto the lipid carrier undecaprenyl phosphate, yielding undecaprenyl-pyrophosphoryl-MurNAc-pentapeptide, known as lipid I. This Herminiimonas arsenicoxydans protein is Phospho-N-acetylmuramoyl-pentapeptide-transferase.